A 148-amino-acid polypeptide reads, in one-letter code: Protoporphyrinogen IX oxidase (148 aa).

The next 4 helical transmembrane spans lie at 7 to 27 (YFLW…AALF), 59 to 79 (FIAS…LLIA), 86 to 106 (GGWL…HFYC), and 128 to 148 (FNEI…VKPF). Heme is bound at residue His15. Residue Lys92 coordinates heme.

The protein belongs to the HemJ family. In terms of assembly, homodimer. The cofactor is heme b.

The protein localises to the cell membrane. It carries out the reaction protoporphyrinogen IX + 3 A = protoporphyrin IX + 3 AH2. It functions in the pathway porphyrin-containing compound metabolism; protoporphyrin-IX biosynthesis; protoporphyrin-IX from protoporphyrinogen-IX: step 1/1. Its function is as follows. Catalyzes the oxidation of protoporphyrinogen IX to protoporphyrin IX. Is involved in the biosynthesis of tetrapyrrole molecules like heme. Does not use oxygen or artificial electron acceptors such as menadione or benzoquinone. The chain is Protoporphyrinogen IX oxidase from Helicobacter pylori (strain J99 / ATCC 700824) (Campylobacter pylori J99).